The chain runs to 1141 residues: cGMP-inhibited 3',5'-cyclic phosphodiesterase 3A (1141 aa).

The disordered stretch occupies residues 1 to 42 (MAVPGDAARVRDKPVHSGVSQAPTAGRDCHHRADPASPRDSG). 6 helical membrane passes run 61–81 (LSSALCAGSLSFLLALLVRLV), 130–150 (LQPSALLFSLLCAFFWMGLYL), 160–180 (AVALLAACCGGEALVQIGLGV), 185–205 (LLSLPAAGVVLSCLAAATWLV), 210–230 (LGVLMIALTSAVRTVSLISLE), and 232–252 (FKVAWRPYLAYLAGVLGILLA). At Ser312 the chain carries Phosphoserine. Ser428 and Ser438 each carry phosphoserine; by PKA and PKC. Residues 436–448 (RVSSTWTTTTSAT) show a composition bias toward low complexity. The disordered stretch occupies residues 436 to 482 (RVSSTWTTTTSATGLPTLEPAPVRRDRSTSIKLQEAPSSSPDSWNNP). Residues 465–482 (SIKLQEAPSSSPDSWNNP) show a composition bias toward polar residues. A phosphoserine mark is found at Ser492, Ser520, and Ser524. A disordered region spans residues 590–640 (RPYSQGNPADEPLERSGVATRTPSRTDDTAQVTSDYETNNNSDSSDIVQNE). A compositionally biased stretch (polar residues) spans 608 to 637 (ATRTPSRTDDTAQVTSDYETNNNSDSSDIV). Residues 669 to 1141 (KPILAPEPLV…EEIPTQKPDQ (473 aa)) form an interaction with SLFN12 region. The PDEase domain maps to 674-1093 (PEPLVMDNLD…KMWKKVIEEE (420 aa)). His752 serves as the catalytic Proton donor. His752 contacts AMP. His756, His836, Asp837, and Asp950 together coordinate Mn(2+). 3 residues coordinate AMP: Asp837, Asp950, and Gln1001. Position 837 (Asp837) interacts with Mg(2+). Disordered regions lie at residues 1023-1062 (PGKWVEDSDESGDTDDPEEEEEEAPAPNEEETCENNESPK) and 1100-1141 (ENQS…KPDQ). Over residues 1029 to 1056 (DSDESGDTDDPEEEEEEAPAPNEEETCE) the composition is skewed to acidic residues. Ser1033 is modified (phosphoserine). Thr1036 carries the phosphothreonine modification. Polar residues predominate over residues 1100–1113 (ENQSLDQTPQSHSS). Residue Lys1120 forms a Glycyl lysine isopeptide (Lys-Gly) (interchain with G-Cter in SUMO2) linkage. Over residues 1125–1141 (EKGKPRGEEIPTQKPDQ) the composition is skewed to basic and acidic residues.

This sequence belongs to the cyclic nucleotide phosphodiesterase family. PDE3 subfamily. In terms of assembly, homodimer. Interacts with SLFN12; direct low affinity interaction which is stimulated by binding of 17beta-estradiol/E2 to PDE3A and that positively regulates the ribonuclease activity of SLFN12. Mn(2+) is required as a cofactor. It depends on Mg(2+) as a cofactor.

Its subcellular location is the membrane. It is found in the cytoplasm. The protein localises to the cytosol. It catalyses the reaction a nucleoside 3',5'-cyclic phosphate + H2O = a nucleoside 5'-phosphate + H(+). It carries out the reaction 3',5'-cyclic AMP + H2O = AMP + H(+). The catalysed reaction is 3',5'-cyclic GMP + H2O = GMP + H(+). The enzyme catalyses 3',5'-cyclic UMP + H2O = UMP + H(+). Inhibited by cGMP. Inhibited by 17beta-estradiol. Inhibited by milrinone. Cyclic nucleotide phosphodiesterase with specificity for the second messengers cAMP and cGMP, which are key regulators of many important physiological processes. Also has activity toward cUMP. Independently of its catalytic activity it is part of an E2/17beta-estradiol-induced pro-apoptotic signaling pathway. E2 stabilizes the PDE3A/SLFN12 complex in the cytosol, promoting the dephosphorylation of SLFN12 and activating its pro-apoptotic ribosomal RNA/rRNA ribonuclease activity. This apoptotic pathway might be relevant in tissues with high concentration of E2 and be for instance involved in placenta remodeling. The protein is cGMP-inhibited 3',5'-cyclic phosphodiesterase 3A of Homo sapiens (Human).